A 187-amino-acid chain; its full sequence is Nuclear transcription factor Y subunit C-8 (187 aa).

Residues 163–187 are disordered; it reads WPGAWTSVSGEEEEARGKKGGDDGN. The span at 177–187 shows a compositional bias: basic and acidic residues; the sequence is ARGKKGGDDGN.

Belongs to the NFYC/HAP5 subunit family. In terms of assembly, heterotrimeric transcription factor composed of three components, NF-YA, NF-YB and NF-YC. NF-YB and NF-YC must interact and dimerize for NF-YA association and DNA binding. Expressed in flowers and siliques.

It is found in the nucleus. In terms of biological role, stimulates the transcription of various genes by recognizing and binding to a CCAAT motif in promoters. The protein is Nuclear transcription factor Y subunit C-8 (NFYC8) of Arabidopsis thaliana (Mouse-ear cress).